We begin with the raw amino-acid sequence, 151 residues long: Ribosome maturation factor RimP (151 aa).

Belongs to the RimP family.

The protein resides in the cytoplasm. In terms of biological role, required for maturation of 30S ribosomal subunits. The chain is Ribosome maturation factor RimP from Thermoanaerobacter sp. (strain X514).